Here is a 203-residue protein sequence, read N- to C-terminus: IMP cyclohydrolase (203 aa).

It belongs to the archaeal IMP cyclohydrolase family.

It catalyses the reaction IMP + H2O = 5-formamido-1-(5-phospho-D-ribosyl)imidazole-4-carboxamide. Its pathway is purine metabolism; IMP biosynthesis via de novo pathway; IMP from 5-formamido-1-(5-phospho-D-ribosyl)imidazole-4-carboxamide: step 1/1. In terms of biological role, catalyzes the cyclization of 5-formylamidoimidazole-4-carboxamide ribonucleotide to IMP. This chain is IMP cyclohydrolase, found in Methanococcus aeolicus (strain ATCC BAA-1280 / DSM 17508 / OCM 812 / Nankai-3).